Reading from the N-terminus, the 570-residue chain is High-affinity hexose transporter HXT7 (570 aa).

The Cytoplasmic portion of the chain corresponds to 1–60; the sequence is MSQDAAIAEQTPVEHLSAVDSASHSVLSTPSNKAERDEIKAYGEGEEHEPVVEIPKRPAS. Residues 61–81 form a helical membrane-spanning segment; that stretch reads AYVTVSIMCIMIAFGGFVFGW. Residues 82–116 are Extracellular-facing; it reads DTGTISGFINQTDFIRRFGMKHKDGTNYLSKVRTG. An N-linked (GlcNAc...) asparagine glycan is attached at Asn-91. Residues 117–137 form a helical membrane-spanning segment; it reads LIVSIFNIGCAIGGIILSKLG. The Cytoplasmic segment spans residues 138 to 143; it reads DMYGRK. A helical transmembrane segment spans residues 144–164; it reads VGLIVVVVIYIIGIIIQIASI. The Extracellular portion of the chain corresponds to 165–174; the sequence is NKWYQYFIGR. A helical transmembrane segment spans residues 175-195; it reads IISGLGVGGIAVLSPMLISEV. Over 196 to 201 the chain is Cytoplasmic; the sequence is SPKHLR. Residues 202-222 traverse the membrane as a helical segment; sequence GTLVSCYQLMITAGIFLGYCT. The Extracellular segment spans residues 223–236; sequence NFGTKNYSNSVQWR. Asn-228 carries an N-linked (GlcNAc...) asparagine glycan. A helical membrane pass occupies residues 237-257; it reads VPLGLCFAWALFMIGGMTFVP. Residues 258 to 340 are Cytoplasmic-facing; it reads ESPRYLAEVG…IQSLQQLTGD (83 aa). A helical transmembrane segment spans residues 341–357; the sequence is NYFFYYGTTIFKAVGLS. At 358 to 363 the chain is on the extracellular side; it reads DSFETS. The chain crosses the membrane as a helical span at residues 364–381; sequence IVLGIVNFASTFVGIYVV. Topologically, residues 382 to 388 are cytoplasmic; it reads ERYGRRT. The chain crosses the membrane as a helical span at residues 389-409; sequence CLLWGAASMTACMVVYASVGV. The Extracellular portion of the chain corresponds to 410–431; it reads TRLWPNGQDQPSSKGAGNCMIV. Residues 432-452 form a helical membrane-spanning segment; it reads FACFYIFCFATTWAPIPYVVV. Residues 453–469 are Cytoplasmic-facing; sequence SETFPLRVKSKAMSIAT. The helical transmembrane segment at 470-490 threads the bilayer; that stretch reads AANWLWGFLIGFFTPFITGAI. Residue Asn-491 is a topological domain, extracellular. A helical transmembrane segment spans residues 492–512; it reads FYYGYVFMGCLVFMFFYVLLV. Residues 513-570 lie on the Cytoplasmic side of the membrane; the sequence is VPETKGLTLEEVNTMWEEGVLPWKSASWVPPSRRGANYDAEEMTHDDKPLYKRMFSTK. A Phosphothreonine modification is found at Thr-556. Lys-560 is covalently cross-linked (Glycyl lysine isopeptide (Lys-Gly) (interchain with G-Cter in ubiquitin)).

Belongs to the major facilitator superfamily. Sugar transporter (TC 2.A.1.1) family.

Its subcellular location is the membrane. In terms of biological role, high-affinity glucose transporter. The chain is High-affinity hexose transporter HXT7 (HXT7) from Saccharomyces cerevisiae (strain ATCC 204508 / S288c) (Baker's yeast).